The following is a 297-amino-acid chain: L-ribulose 3-epimerase (297 aa).

Catalysis depends on glutamate 147, which acts as the Proton donor/acceptor. Residue glutamate 147 coordinates Mn(2+). Residues glutamate 153 and 180 to 183 (DTFH) contribute to the substrate site. Residues aspartate 180 and histidine 206 each coordinate Mn(2+). A substrate-binding site is contributed by arginine 212. Residue glutamate 241 is the Proton donor/acceptor of the active site. Residue glutamate 241 participates in Mn(2+) binding.

Belongs to the hyi family. Homotetramer. Mn(2+) is required as a cofactor.

It catalyses the reaction L-ribulose = L-xylulose. The catalysed reaction is keto-D-tagatose = keto-D-sorbose. It carries out the reaction D-allulose = keto-D-fructose. Strongly inhibited by Co(2+) and Ni(2+), and slightly inhibited by EDTA. Functionally, catalyzes the epimerization of various ketoses at the C(3) position. It is able to interconvert L-ribulose with high efficiency. The enzyme can also accept other ketopentoses such as D-psicose and D-tagatose with lower efficiency. The polypeptide is L-ribulose 3-epimerase (Mesorhizobium japonicum (strain LMG 29417 / CECT 9101 / MAFF 303099) (Mesorhizobium loti (strain MAFF 303099))).